We begin with the raw amino-acid sequence, 220 residues long: Deoxyribose-phosphate aldolase 1 (220 aa).

Catalysis depends on D89, which acts as the Proton donor/acceptor. The active-site Schiff-base intermediate with acetaldehyde is the K151. The active-site Proton donor/acceptor is the K180.

Belongs to the DeoC/FbaB aldolase family. DeoC type 1 subfamily.

The protein resides in the cytoplasm. The enzyme catalyses 2-deoxy-D-ribose 5-phosphate = D-glyceraldehyde 3-phosphate + acetaldehyde. It participates in carbohydrate degradation; 2-deoxy-D-ribose 1-phosphate degradation; D-glyceraldehyde 3-phosphate and acetaldehyde from 2-deoxy-alpha-D-ribose 1-phosphate: step 2/2. Its function is as follows. Catalyzes a reversible aldol reaction between acetaldehyde and D-glyceraldehyde 3-phosphate to generate 2-deoxy-D-ribose 5-phosphate. In Staphylococcus aureus (strain MRSA252), this protein is Deoxyribose-phosphate aldolase 1.